A 432-amino-acid chain; its full sequence is Tol-Pal system protein TolB (432 aa).

Positions 1–21 (MKKVIYTIVGFVFMWSTSVYA) are cleaved as a signal peptide.

It belongs to the TolB family. The Tol-Pal system is composed of five core proteins: the inner membrane proteins TolA, TolQ and TolR, the periplasmic protein TolB and the outer membrane protein Pal. They form a network linking the inner and outer membranes and the peptidoglycan layer.

It localises to the periplasm. Its function is as follows. Part of the Tol-Pal system, which plays a role in outer membrane invagination during cell division and is important for maintaining outer membrane integrity. This Hydrogenovibrio crunogenus (strain DSM 25203 / XCL-2) (Thiomicrospira crunogena) protein is Tol-Pal system protein TolB.